The chain runs to 101 residues: Enhancer of yellow 2 transcription factor (101 aa).

Belongs to the ENY2 family. In terms of assembly, component of the nuclear pore complex (NPC)-associated AMEX complex (anchoring and mRNA export complex), composed of at least e(y)2 and xmas-2. Component of the SAGA transcription coactivator-HAT complexes, at least composed of Ada2b, e(y)2, Pcaf/Gcn5, Taf10 and Nipped-A/Trrap. Within the SAGA complex, e(y)2, Sgf11, and not/nonstop form an additional subcomplex of SAGA called the DUB module (deubiquitination module). Component of the THO complex, composed of at least e(y)2, HPR1, THO2, THOC5, THOC6 and THOC7. Interacts with e(y)1. Interacts with su(Hw) (via zinc fingers). Interacts with xmas-2; required for localization to the nuclear periphery. Interacts with the nuclear pore complex (NPC).

The protein localises to the nucleus. It localises to the nucleoplasm. Its subcellular location is the cytoplasm. Functionally, involved in mRNA export coupled transcription activation by association with both the AMEX and the SAGA complexes. The SAGA complex is a multiprotein complex that activates transcription by remodeling chromatin and mediating histone acetylation and deubiquitination. Within the SAGA complex, participates in a subcomplex that specifically deubiquitinates histone H2B. The SAGA complex is recruited to specific gene promoters by activators, where it is required for transcription. Required for nuclear receptor-mediated transactivation. Involved in transcription elongation by recruiting the THO complex onto nascent mRNA. The AMEX complex functions in docking export-competent ribonucleoprotein particles (mRNPs) to the nuclear entrance of the nuclear pore complex (nuclear basket). AMEX participates in mRNA export and accurate chromatin positioning in the nucleus by tethering genes to the nuclear periphery. The chain is Enhancer of yellow 2 transcription factor from Drosophila erecta (Fruit fly).